The sequence spans 117 residues: Large ribosomal subunit protein bL20c (117 aa).

This sequence belongs to the bacterial ribosomal protein bL20 family.

Its subcellular location is the plastid. The protein localises to the chloroplast. Binds directly to 23S ribosomal RNA and is necessary for the in vitro assembly process of the 50S ribosomal subunit. It is not involved in the protein synthesizing functions of that subunit. In Thalassiosira pseudonana (Marine diatom), this protein is Large ribosomal subunit protein bL20c.